The chain runs to 957 residues: Glycine dehydrogenase (decarboxylating) (957 aa).

N6-(pyridoxal phosphate)lysine is present on Lys708.

It belongs to the GcvP family. The glycine cleavage system is composed of four proteins: P, T, L and H. Pyridoxal 5'-phosphate serves as cofactor.

It carries out the reaction N(6)-[(R)-lipoyl]-L-lysyl-[glycine-cleavage complex H protein] + glycine + H(+) = N(6)-[(R)-S(8)-aminomethyldihydrolipoyl]-L-lysyl-[glycine-cleavage complex H protein] + CO2. Its function is as follows. The glycine cleavage system catalyzes the degradation of glycine. The P protein binds the alpha-amino group of glycine through its pyridoxal phosphate cofactor; CO(2) is released and the remaining methylamine moiety is then transferred to the lipoamide cofactor of the H protein. The polypeptide is Glycine dehydrogenase (decarboxylating) (Salmonella arizonae (strain ATCC BAA-731 / CDC346-86 / RSK2980)).